We begin with the raw amino-acid sequence, 1591 residues long: MRTTKVYKLVIHKKGFGGSDDELVVNPKVFPHIKLGDIVEIAHPNDEYSPLLLQVKSLKEDLQKETISVDQTVTQVFRLRPYQDVYVNVVDPKDVTLDLVELTFKDQYIGRGDMWRLKKSLVSTCAYITQKVEFAGIRAQAGELWVKNEKVMCGYISEETRVVFRSTSAMVYIFIQMSCEMWDFDIYGDLYFEKAVNGFLADLFTKWKEKNCSHEVTVVLFSRTFYDAKSIDEFPEINRASIQEDHKGRFYEDFYKVVVQNERREEWTSLLVTIKKLFIQYPVLVRLEQAGGFPQGDNSTSAQGNYLEAINLSFNVFDKHYINRNFDRTGQMSVVITPGVGVFEVDRLLMILTKQRMIDNGIGVDLVCMGEQPLHAVPLFKLHNRSVPRDSRLGDDYNIPHWINHSFYTSKSQLFCNSFTPRIKLAGKKSASEKTKNGRDTSLGTPKESENTLPIQVDYDAYDAQVFRLPGPSRAQRLATCRSVREQENHSRKSASSCDVSSSPSLPSRALPTEEVRSQASDDSSLGKSTNILMIPNPHLHQYEVSSSLGYTSTRDVLENMIEPPQRDSSAPGRFHVGSAESMLHVRPGGYTPQRALINPFAPSRMPMKLTSNRRRWMHTFPVGPSGEAIQIHHQTRQNMAELQGSRQRDPTHSSAELLELAYHEAAGRHSTSRQPGDSMSLNFSGTEELSVSLLSNSSTGVNPRTQNKDSLEDSVSTSPDPMPGFCCTVGVDWKSLTTPACLPLTTDYFPDRQGLQNDYTEGCYDLLPEADMDRRDEEGVQMTAQQVFEEFICQRLMQGYQIIVQPKTQKPNTTVPPPLSSSPLYSRGLVSRNRPEEEGQYWLSMGRTFHKVTLKDKMITVTRYLPKYPYESAQIHYTYSLCPSHSDSEFVSCWVDFCHERLEEYKWNYLDQYICSAGSEDFSLIESLKFWRTRFLLLPACVTATKRITEGEVHCDIYGDKPRADEDEWQLLDGFIRFVEGLNRIRRRHRSDRMIRKGTAMKGLQMTGPISAHSLEAAGPPVGKKGTSALSALLEMEASQKSLGEQQTTVHGKSSTQPAENSSVAMTPTYVDSPRKDGAFFMEFVRSPRTASSAFYPQASVDQTAPLVLDSTSLGVSTGQPMDRGNNQTFGNSQNIEQAFPSANSGDYSSQQHVASSLTSSSTLVEILEAMKHPSTGVQLLSEQKGLSPCCFISAEVVHWLMNNVEGVQTQAMGIDIMQKMLEEQLITHASGEAWRTFIYGFYFYKIVMDKEPERVAMQQPSAPWYTAGADDFASFQRKWFEVAFVAEELVHSEIPAFLLPWLPSRPASYASRHSSFSRSFGGRSQAAALLAATVPEQRTVTLDVDVNNRTDRLEWCSCYYHGNFSLNAAFEIKLHWMAVTATVLFEMVQGWHRKATSCGFLLVPVLEGPFALPSYLYGDPLRAQLFIPLNLSCLLKEGSEHLFDSFEPETYWDRMHLFQEAIAHRFGFVQDKYSVSAFNFPAENKPQYIHVTGTVFLQLPYSKRKFSGQQRRRRNSTSSTNQNMFCEERVGYNWAYNTMLTKTWRSSATGDEKFADRLLKDFTDFCINRDNRLVTFWTNCLEKMHASAP.

3 disordered regions span residues 427 to 455, 478 to 532, and 695 to 720; these read GKKS…TLPI, LATC…STNI, and LSNS…STSP. Residues 430–439 are compositionally biased toward basic and acidic residues; the sequence is SASEKTKNGR. Low complexity predominate over residues 494 to 508; it reads SASSCDVSSSPSLPS. S505 carries the phosphoserine modification. Residues 518–532 show a composition bias toward polar residues; sequence SQASDDSSLGKSTNI. The residue at position 992 (S992) is a Phosphoserine. Disordered regions lie at residues 1040–1064 and 1118–1153; these read SQKS…ENSS and STGQ…SSQQ. The span at 1118–1149 shows a compositional bias: polar residues; that stretch reads STGQPMDRGNNQTFGNSQNIEQAFPSANSGDY. One can recognise a DEP domain in the interval 1175–1250; sequence PSTGVQLLSE…YGFYFYKIVM (76 aa). S1518 is subject to Phosphoserine.

This sequence belongs to the IML1 family. As to quaternary structure, within the GATOR complex, component of the GATOR1 subcomplex, made of DEPDC5, NPRL2 and NPRL3. GATOR1 mediates the strong interaction of the GATOR complex with small GTPases Rag (RagA/RRAGA, RagB/RRAGB, RagC/RRAGC and/or RagD/RRAGD) heterodimers. GATOR1 interacts with GPR155/LYCHOS; interaction takes place in presence of cholesterol and prevents interaction between GATOR1 and KICSTOR. Interacts with SAMTOR; interaction is direct and takes place in presence of methionine, leading to inhibit the activity of the GATOR1 complex. In terms of processing, phosphorylation at Ser-992 and Ser-1518 by AKT1 and PIM1 inhibit the activity of DEPDC5, releasing inhibition of the mTORC1 pathway. Ubiquitinated. Amino acid-induced 'Lys-48'-linked polyubiquitination of DEPDC5 by the BCR(KLHL22) ubiquitin ligase complex leads to DEPDC5 proteasomal degradation and inhibition of the GATOR1 complex. Ubiquitination may occur at multiple lysines. In terms of tissue distribution, expressed at low levels in all brain regions. Expressed throughout brain development, including in midgestation embryonic head (11.5 dpc), neonatal brain and whole adult brain. Present in neurons and absent in non-neuronal cells, including astrocytes (at protein level).

The protein resides in the lysosome membrane. It localises to the cytoplasm. Its subcellular location is the cytosol. The protein localises to the perinuclear region. Its function is as follows. As a component of the GATOR1 complex functions as an inhibitor of the amino acid-sensing branch of the mTORC1 pathway. In response to amino acid depletion, the GATOR1 complex has GTPase activating protein (GAP) activity and strongly increases GTP hydrolysis by RagA/RRAGA (or RagB/RRAGB) within heterodimeric Rag complexes, thereby turning them into their inactive GDP-bound form, releasing mTORC1 from lysosomal surface and inhibiting mTORC1 signaling. In the presence of abundant amino acids, the GATOR1 complex is negatively regulated by GATOR2, the other GATOR subcomplex, in this amino acid-sensing branch of the TORC1 pathway. Within the GATOR1 complex, DEPDC5 mediates direct interaction with the nucleotide-binding pocket of small GTPases Rag (RagA/RRAGA, RagB/RRAGB, RagC/RRAGC and/or RagD/RRAGD) and coordinates their nucleotide loading states by promoting RagA/RRAGA or RagB/RRAGB into their GDP-binding state and RagC/RRAGC or RagD/RRAGD into their GTP-binding state. However, it does not execute the GAP activity, which is mediated by NPRL2. In Mus musculus (Mouse), this protein is GATOR1 complex protein DEPDC5.